A 242-amino-acid chain; its full sequence is Putative prolyl 4-hydroxylase (242 aa).

The region spanning 128–238 is the Fe2OG dioxygenase domain; it reads NAEDLQVVRY…KWIANLWFRE (111 aa).

It belongs to the P4HA family. Fe cation serves as cofactor. It depends on L-ascorbate as a cofactor.

Its subcellular location is the virion. The catalysed reaction is L-prolyl-[collagen] + 2-oxoglutarate + O2 = trans-4-hydroxy-L-prolyl-[collagen] + succinate + CO2. Its function is as follows. May catalyze the post-translational formation of 4-hydroxyproline in -Xaa-Pro-Gly- sequences in the 6 collagen-like proteins of Mimivirus. The polypeptide is Putative prolyl 4-hydroxylase (Acanthamoeba polyphaga mimivirus (APMV)).